Consider the following 359-residue polypeptide: Membrane-bound lytic murein transglycosylase C (359 aa).

An N-terminal signal peptide occupies residues 1–16 (MKKYLALALIAPLLIS). Residue Cys17 is the site of N-palmitoyl cysteine attachment. Cys17 carries the S-diacylglycerol cysteine lipid modification.

This sequence belongs to the transglycosylase Slt family.

The protein resides in the cell outer membrane. The enzyme catalyses Exolytic cleavage of the (1-&gt;4)-beta-glycosidic linkage between N-acetylmuramic acid (MurNAc) and N-acetylglucosamine (GlcNAc) residues in peptidoglycan, from either the reducing or the non-reducing ends of the peptidoglycan chains, with concomitant formation of a 1,6-anhydrobond in the MurNAc residue.. Functionally, murein-degrading enzyme. May play a role in recycling of muropeptides during cell elongation and/or cell division. The chain is Membrane-bound lytic murein transglycosylase C from Shigella sonnei (strain Ss046).